The sequence spans 786 residues: Progesterone receptor (786 aa).

Over residues 1-10 the composition is skewed to basic and acidic residues; sequence MTEVKSKETR. 3 disordered regions span residues 1 to 95, 110 to 212, and 252 to 279; these read MTEV…SKDC, AAPW…ASPA, and SAFGPRSSPSVPAADLAEYGYPPPDGKE. A modulating, Pro-Rich region spans residues 1-420; that stretch reads MTEVKSKETR…YSFESLPQKI (420 aa). A Glycyl lysine isopeptide (Lys-Gly) (interchain with G-Cter in SUMO) cross-link involves residue lysine 7. Acidic residues predominate over residues 48-79; the sequence is DEEEEEEENEEEEEEEEPQQREEEEEEEEEDR. Residues 143–154 show a composition bias toward pro residues; the sequence is APGPSQPRPGAP. Residues 186 to 197 show a composition bias toward basic and acidic residues; it reads AEERGFPERDAG. Residues 203-212 show a composition bias toward low complexity; it reads LAPAAAASPA. 2 positions are modified to phosphoserine: serine 210 and serine 259. Residue lysine 294 forms a Glycyl lysine isopeptide (Lys-Gly) (interchain with G-Cter in SUMO); alternate linkage. Lysine 294 participates in a covalent cross-link: Glycyl lysine isopeptide (Lys-Gly) (interchain with G-Cter in ubiquitin); alternate. Lysine 385 participates in a covalent cross-link: Glycyl lysine isopeptide (Lys-Gly) (interchain with G-Cter in SUMO). NR C4-type zinc fingers lie at residues 421–441 and 457–481; these read CLICGDEASGCHYGVLTCGSC and CAGRNDCIVDKIRRKNCPACRLRKC. The nuclear receptor DNA-binding region spans 421–486; sequence CLICGDEASG…RLRKCCQAGM (66 aa). Phosphoserine is present on serine 529. The NR LBD domain occupies 532-766; it reads QEIPFVPPMI…EFPEMMSEVI (235 aa).

This sequence belongs to the nuclear hormone receptor family. NR3 subfamily. Phosphorylation of Ser-529 is sharply increased upon progesterone treatment, whereas phosphorylation of Ser-210 and Ser-259 is modestly induced by progesterone. In terms of processing, ubiquitinated. Ubiquitination is increased by progesterone and represses sumoylation at the same site. Post-translationally, sumoylation is hormone-dependent and represses transcriptional activity. Sumoylation on all three sites is enhanced by PIAS3. Desumoylated by SENP1. Sumoylation on Lys-385, the main site of sumoylation, is repressed by ubiquitination on the same site. Oviduct and bursa of Fabricius.

The protein localises to the nucleus. It is found in the cytoplasm. Its function is as follows. The steroid hormones and their receptors are involved in the regulation of eukaryotic gene expression and affect cellular proliferation and differentiation in target tissues. The sequence is that of Progesterone receptor (PGR) from Gallus gallus (Chicken).